A 97-amino-acid chain; its full sequence is ATP-dependent Clp protease adapter protein ClpS (97 aa).

This sequence belongs to the ClpS family. As to quaternary structure, binds to the N-terminal domain of the chaperone ClpA.

In terms of biological role, involved in the modulation of the specificity of the ClpAP-mediated ATP-dependent protein degradation. The polypeptide is ATP-dependent Clp protease adapter protein ClpS (Nautilia profundicola (strain ATCC BAA-1463 / DSM 18972 / AmH)).